We begin with the raw amino-acid sequence, 465 residues long: UDP-N-acetylmuramate--L-alanine ligase (465 aa).

Residue 112–118 (GTHGKTT) coordinates ATP.

Belongs to the MurCDEF family.

It is found in the cytoplasm. It catalyses the reaction UDP-N-acetyl-alpha-D-muramate + L-alanine + ATP = UDP-N-acetyl-alpha-D-muramoyl-L-alanine + ADP + phosphate + H(+). It functions in the pathway cell wall biogenesis; peptidoglycan biosynthesis. Functionally, cell wall formation. The sequence is that of UDP-N-acetylmuramate--L-alanine ligase from Burkholderia cenocepacia (strain ATCC BAA-245 / DSM 16553 / LMG 16656 / NCTC 13227 / J2315 / CF5610) (Burkholderia cepacia (strain J2315)).